The primary structure comprises 591 residues: DEAD-box ATP-dependent RNA helicase 30 (591 aa).

Positions 1–109 (MSSYDRRFAD…GRGGSSKREL (109 aa)) are disordered. The span at 72–103 (FSVGRGGGRGGYGQYGDRNGGGNWGGGGGRGG) shows a compositional bias: gly residues. A Q motif motif is present at residues 165–193 (KMFQDANFPDNILEAIAKLGFTEPTPIQA). One can recognise a Helicase ATP-binding domain in the interval 196–371 (WPMALKGRDL…RQFLRDPYKA (176 aa)). 209-216 (AETGSGKT) serves as a coordination point for ATP. Residues 319 to 322 (DEAD) carry the DEAD box motif. Residues 399–544 (RLLTLLKQLM…VVPPTLSALV (146 aa)) form the Helicase C-terminal domain. Residues 547–591 (SGSGYGGSGGGRNFRPRGGGRGGGFGDKRSRSTSNFVPHGGKRTW) are disordered. Positions 549 to 571 (SGYGGSGGGRNFRPRGGGRGGGF) are enriched in gly residues.

Belongs to the DEAD box helicase family. DDX5/DBP2 subfamily.

Its subcellular location is the nucleus. The catalysed reaction is ATP + H2O = ADP + phosphate + H(+). ATP-dependent RNA helicase involved nonsense-mediated mRNA decay and ribosome biogenesis through rRNA processing. The protein is DEAD-box ATP-dependent RNA helicase 30 (RH30) of Arabidopsis thaliana (Mouse-ear cress).